Here is a 62-residue protein sequence, read N- to C-terminus: Cytotoxin 7 (62 aa).

The signal sequence occupies residues 1-2 (YT). 4 cysteine pairs are disulfide-bonded: cysteine 5–cysteine 23, cysteine 16–cysteine 40, cysteine 44–cysteine 55, and cysteine 56–cysteine 61.

Belongs to the three-finger toxin family. Short-chain subfamily. Type IA cytotoxin sub-subfamily. In terms of assembly, monomer in solution; Homodimer and oligomer in the presence of negatively charged lipids forming a pore with a size ranging between 20 and 30 Angstroms. Expressed by the venom gland.

It localises to the secreted. It is found in the target cell membrane. In terms of biological role, shows cytolytic activity on many different cells by forming pore in lipid membranes. In vivo, increases heart rate or kills the animal by cardiac arrest. In addition, it binds to heparin with high affinity, interacts with Kv channel-interacting protein 1 (KCNIP1) in a calcium-independent manner, and binds to integrin alpha-V/beta-3 (ITGAV/ITGB3) with moderate affinity. This Naja sputatrix (Malayan spitting cobra) protein is Cytotoxin 7.